A 382-amino-acid polypeptide reads, in one-letter code: MNHDESEEKTESPTSYRLKISKETGHNRYYRELYSLLILTITLINFWYNQRLILTLLKRIFYLSFTFNNSIFQNDLFLDHNFLMIFQDNLISLLGIIFFPMLIFMFPAMILCCSNFNFKFIKFDINKLNPILGFKNVFSIKSIVDLFKTVLKIVFVSIVVYLFISKYFLKVCFSSNFTFDYILNYSVRTIFLCFLTILIFFIPIIIIDLFWEKYNFYRSLRMTRKEVSDELKNMEGNPRIKSRIRQIMFSISNRRMLSNVSKSDVIVVNPMHYAIAIKYNETNMYAPKILAKGIDELAIKIKKIGNNHSIPTLVSHSLAHVLYYRTEVGEYIPSVLYEAVAEVLAWVWKIRHWKIKGGVFPRTPEKFFIPSELYEKRIKKRG.

The next 4 membrane-spanning stretches (helical) occupy residues 33-55, 90-112, 150-169, and 189-211; these read LYSL…LILT, LISL…MILC, VLKI…KYFL, and TIFL…DLFW.

The protein belongs to the type III secretion exporter family.

The protein localises to the cell membrane. Functionally, required for formation of the rod structure in the basal body of the flagellar apparatus. Together with FliI and FliH, may constitute the export apparatus of flagellin. This Buchnera aphidicola subsp. Baizongia pistaciae (strain Bp) protein is Flagellar biosynthetic protein FlhB (flhB).